Reading from the N-terminus, the 299-residue chain is ATP phosphoribosyltransferase (299 aa).

Belongs to the ATP phosphoribosyltransferase family. Long subfamily. The cofactor is Mg(2+).

The protein localises to the cytoplasm. The enzyme catalyses 1-(5-phospho-beta-D-ribosyl)-ATP + diphosphate = 5-phospho-alpha-D-ribose 1-diphosphate + ATP. The protein operates within amino-acid biosynthesis; L-histidine biosynthesis; L-histidine from 5-phospho-alpha-D-ribose 1-diphosphate: step 1/9. With respect to regulation, feedback inhibited by histidine. In terms of biological role, catalyzes the condensation of ATP and 5-phosphoribose 1-diphosphate to form N'-(5'-phosphoribosyl)-ATP (PR-ATP). Has a crucial role in the pathway because the rate of histidine biosynthesis seems to be controlled primarily by regulation of HisG enzymatic activity. This is ATP phosphoribosyltransferase from Shewanella sp. (strain MR-7).